Consider the following 293-residue polypeptide: Ribonuclease H2 subunit B (293 aa).

A disordered region spans residues 251–278 (KRPQNSDITSSLLKKPNRKQATKKSKYF). The span at 265–276 (KPNRKQATKKSK) shows a compositional bias: basic residues.

This sequence belongs to the RNase H2 subunit B family. Component of the RNase H2 complex.

It localises to the nucleus. Its subcellular location is the cytoplasm. Its function is as follows. Non catalytic subunit of RNase H2, an endonuclease that specifically degrades the RNA of RNA:DNA hybrids. Participates in DNA replication, possibly by mediating the removal of lagging-strand Okazaki fragment RNA primers during DNA replication. Mediates the excision of single ribonucleotides from DNA:RNA duplexes. The polypeptide is Ribonuclease H2 subunit B (rnh202) (Schizosaccharomyces pombe (strain 972 / ATCC 24843) (Fission yeast)).